The sequence spans 175 residues: Large ribosomal subunit protein uL6 (175 aa).

The protein belongs to the universal ribosomal protein uL6 family. Part of the 50S ribosomal subunit.

This protein binds to the 23S rRNA, and is important in its secondary structure. It is located near the subunit interface in the base of the L7/L12 stalk, and near the tRNA binding site of the peptidyltransferase center. The sequence is that of Large ribosomal subunit protein uL6 from Xylella fastidiosa (strain 9a5c).